Reading from the N-terminus, the 370-residue chain is Pyrimidine monooxygenase RutA (370 aa).

Residues 49-50, asparagine 115, glutamate 124, 140-141, and serine 190 each bind FMN; these read IK and RY.

Belongs to the NtaA/SnaA/DszA monooxygenase family. RutA subfamily.

The catalysed reaction is uracil + FMNH2 + NADH + O2 = (Z)-3-ureidoacrylate + FMN + NAD(+) + H2O + H(+). It carries out the reaction thymine + FMNH2 + NADH + O2 = (Z)-2-methylureidoacrylate + FMN + NAD(+) + H2O + H(+). Its function is as follows. Catalyzes the pyrimidine ring opening between N-3 and C-4 by an unusual flavin hydroperoxide-catalyzed mechanism, adding oxygen atoms in the process to yield ureidoacrylate peracid, that immediately reacts with FMN forming ureidoacrylate and FMN-N(5)-oxide. The FMN-N(5)-oxide reacts spontaneously with NADH to produce FMN. Requires the flavin reductase RutF to regenerate FMN in vivo. The polypeptide is Pyrimidine monooxygenase RutA (Variovorax paradoxus (strain S110)).